We begin with the raw amino-acid sequence, 367 residues long: MKNEYLLLTPGPLSTSETVREAMLKDWCTWDDEYNKDIVEVIRTKLVKLATKHSGYTSVLMQGCGTASVEATIGSAIGKEGKLLVVDNGAYGARIAQIADYLNIPCHVVSPGETSQPHLNEVETALASDPAITHVAIVHCETTTGMLNPIEAFASAAKAHGKVVILDAMSSFGGIPMDIADLGIDFMISSANKCIQGVPGFGFVIAKQTELEKCQDQARSLSLDLYDQWHCMEVNHGKWRFTSPTHTVRAFYQALLELEQEGGIEARHNRYQTNQKTLVAGMRSLGFEPLLSDDLHSPIITSFYSPTHSDYQFKAFYTRLKEQGFVIYPGKVSNADCFRIGNIGEVYPADIERLIGAIEKAMYWQVA.

Lys-193 bears the N6-(pyridoxal phosphate)lysine mark.

It belongs to the class-V pyridoxal-phosphate-dependent aminotransferase family. PhnW subfamily. As to quaternary structure, homodimer. Pyridoxal 5'-phosphate is required as a cofactor.

It carries out the reaction (2-aminoethyl)phosphonate + pyruvate = phosphonoacetaldehyde + L-alanine. Its function is as follows. Involved in phosphonate degradation. In Vibrio parahaemolyticus serotype O3:K6 (strain RIMD 2210633), this protein is 2-aminoethylphosphonate--pyruvate transaminase.